Here is a 624-residue protein sequence, read N- to C-terminus: UvrABC system protein C (624 aa).

Residues 27 to 105 (LSPGVYRMLS…IKSLGPRYNI (79 aa)) form the GIY-YIG domain. The UVR domain maps to 215–250 (RRVQHDLTARMESAAEAMEYEAAAVFRDRIRALTRI).

This sequence belongs to the UvrC family. Interacts with UvrB in an incision complex.

It localises to the cytoplasm. Its function is as follows. The UvrABC repair system catalyzes the recognition and processing of DNA lesions. UvrC both incises the 5' and 3' sides of the lesion. The N-terminal half is responsible for the 3' incision and the C-terminal half is responsible for the 5' incision. The protein is UvrABC system protein C of Paramagnetospirillum magneticum (strain ATCC 700264 / AMB-1) (Magnetospirillum magneticum).